Here is a 419-residue protein sequence, read N- to C-terminus: Nodulation protein NoeE (419 aa).

Its function is as follows. Required for the formation of sulfated nod factor. Proposed to transfer activated sulfate (PAPS) to the fucose of the nod factor. This is Nodulation protein NoeE (noeE) from Sinorhizobium fredii (strain NBRC 101917 / NGR234).